Reading from the N-terminus, the 160-residue chain is UPF0479 membrane protein YLL066W-A (160 aa).

2 helical membrane-spanning segments follow: residues 39–59 (IVFCLPFFPALFLVPVQKVLQ) and 136–156 (VPMIWLDVFQVFFVFLVISQH).

It belongs to the UPF0479 family.

It localises to the membrane. The sequence is that of UPF0479 membrane protein YLL066W-A from Saccharomyces cerevisiae (strain ATCC 204508 / S288c) (Baker's yeast).